We begin with the raw amino-acid sequence, 381 residues long: Fe-S cluster assembly protein DRE2 (381 aa).

Residues 8–165 are N-terminal SAM-like domain; it reads AQGSGRFLLL…KPDFGAQQAV (158 aa). The disordered stretch occupies residues 100–134; the sequence is RNRDNQIWGSGSDSAAGLGSSDGDGGGGEKMSSSE. The segment covering 108–118 has biased composition (low complexity); sequence GSGSDSAAGLG. The segment covering 119 to 128 has biased composition (gly residues); the sequence is SSDGDGGGGE. The linker stretch occupies residues 166-273; that stretch reads PLKLGRKKNL…EEELLGEYDM (108 aa). Cys-283, Cys-294, Cys-297, and Cys-299 together coordinate [2Fe-2S] cluster. The interval 283–299 is fe-S binding site A; the sequence is CRPKAGKRRRACKDCTC. [4Fe-4S] cluster contacts are provided by Cys-344, Cys-347, Cys-355, and Cys-358. 2 consecutive short sequence motifs (cx2C motif) follow at residues 344 to 347 and 355 to 358; these read CGNC and CDGC. The segment at 344 to 358 is fe-S binding site B; it reads CGNCALGDAFRCDGC.

It belongs to the anamorsin family. Monomer. Interacts with TAH18. Interacts with MIA40. [2Fe-2S] cluster serves as cofactor. The cofactor is [4Fe-4S] cluster.

The protein localises to the cytoplasm. It is found in the mitochondrion intermembrane space. In terms of biological role, component of the cytosolic iron-sulfur (Fe-S) protein assembly (CIA) machinery required for the maturation of extramitochondrial Fe-S proteins. Part of an electron transfer chain functioning in an early step of cytosolic Fe-S biogenesis, facilitating the de novo assembly of a [4Fe-4S] cluster on the scaffold complex CFD1-NBP35. Electrons are transferred to DRE2 from NADPH via the FAD- and FMN-containing protein TAH18. TAH18-DRE2 are also required for the assembly of the diferric tyrosyl radical cofactor of ribonucleotide reductase (RNR), probably by providing electrons for reduction during radical cofactor maturation in the catalytic small subunit RNR2. In Paracoccidioides brasiliensis (strain Pb18), this protein is Fe-S cluster assembly protein DRE2.